The chain runs to 117 residues: UPF0102 protein FTW_1281 (117 aa).

The protein belongs to the UPF0102 family.

The polypeptide is UPF0102 protein FTW_1281 (Francisella tularensis subsp. tularensis (strain WY96-3418)).